The sequence spans 447 residues: Na(+)-translocating NADH-quinone reductase subunit A (447 aa).

It belongs to the NqrA family. As to quaternary structure, composed of six subunits; NqrA, NqrB, NqrC, NqrD, NqrE and NqrF.

It carries out the reaction a ubiquinone + n Na(+)(in) + NADH + H(+) = a ubiquinol + n Na(+)(out) + NAD(+). In terms of biological role, NQR complex catalyzes the reduction of ubiquinone-1 to ubiquinol by two successive reactions, coupled with the transport of Na(+) ions from the cytoplasm to the periplasm. NqrA to NqrE are probably involved in the second step, the conversion of ubisemiquinone to ubiquinol. This Haemophilus influenzae (strain ATCC 51907 / DSM 11121 / KW20 / Rd) protein is Na(+)-translocating NADH-quinone reductase subunit A.